The primary structure comprises 558 residues: Cytochrome P450 monooxygenase grgG (558 aa).

A helical membrane pass occupies residues 11–31 (PASFIYFPLLILVGHALIFIL). C470 is a binding site for heme.

This sequence belongs to the cytochrome P450 family. The cofactor is heme.

The protein localises to the membrane. It functions in the pathway secondary metabolite biosynthesis. In terms of biological role, cytochrome P450 monooxygenase; part of the gene cluster that mediates the biosynthesis of gregatin A, a fungal polyketide featuring an alkylated furanone core. The PKS grgA synthesizes C11 and C4 polyketide chains in the presence and absence of the trans-enoyl reductase grgB, respectively. The polyketide transferase grgF is then responsible for the fusion of the two carbon chains to produce the furanone skeleton of gregatin A. Next, the cytochrome P450 monooxygenase grgG performs the oxidative cyclization to furnish the gregatin scaffold and leads to the formation of desmethylgregatin A. In this transformation, grgG initially abstracts a hydrogen atom from C-8 to generate a substrate radical, from which one electron is transferred to the iron-heme center to yield a carbocationic species. Heterocyclization along with double-bond isomerizations provides desmethylgregatin A with the furanone ring. Alternatively, grgG might provide hydroxylation at the C-8 radical, which is followed by dehydration to give the cyclized desmethylgregatin A. Finally, the O-methyltransferase grgD methylates the carboxyl group of desmethylgregatin A to provide gregatin A. In Penicillium sp, this protein is Cytochrome P450 monooxygenase grgG (grgG).